A 408-amino-acid chain; its full sequence is Argininosuccinate synthase (408 aa).

Residues 16 to 24 and Ala-44 contribute to the ATP site; that span reads AYSGGLDTS. Positions 96 and 101 each coordinate L-citrulline. Residue Gly-126 participates in ATP binding. Residues Thr-128, Asn-132, and Asp-133 each coordinate L-aspartate. Asn-132 lines the L-citrulline pocket. Arg-136, Ser-185, Ser-194, Glu-270, and Tyr-282 together coordinate L-citrulline.

The protein belongs to the argininosuccinate synthase family. Type 1 subfamily. In terms of assembly, homotetramer.

Its subcellular location is the cytoplasm. The enzyme catalyses L-citrulline + L-aspartate + ATP = 2-(N(omega)-L-arginino)succinate + AMP + diphosphate + H(+). It participates in amino-acid biosynthesis; L-arginine biosynthesis; L-arginine from L-ornithine and carbamoyl phosphate: step 2/3. The polypeptide is Argininosuccinate synthase (Shewanella woodyi (strain ATCC 51908 / MS32)).